The following is a 358-amino-acid chain: uncharacterized protein (358 aa).

The protein belongs to the methyltransferase superfamily.

This is an uncharacterized protein from Mycobacterium tuberculosis (strain CDC 1551 / Oshkosh).